Reading from the N-terminus, the 952-residue chain is MSPTSETAKGGRRLVIVESPAKAKTIKGYLGPGYVVEASVGHIRDLPSGAAEVPEKYTGEVRRLGVDVEHDFQPIYVVNADKKSQVKKLKDLLKESDELFLATDEDREGEAIAWHLQEVLKPKIPVKRMVFHEITKDAIRAAVANPRELNQKLVDAQETRRILDRLYGYEVSPVLWKKVMPRLSAGRVQSVATRLVVERERERIAFRSAEYWDLTGTFATGRAGDASDPSSLVARLQTVDGRRVAQGRDFDSLGQLKSANTLHLDEANARALAAALENTRFAVRSVESKPYRRSPYAPFRTTTLQQEASRKLGFGAKSTMQVAQKLYENGYITYMRTDSTTLSDTAVSAARAQVTQLYGADYLPPQPRTYAGKVKNAQEAHEAIRPSGDRFRTPAETGLTGDQFKLYELIWKRTVASQMKDATGNSVTVKIGGAASDGRDVEFSASGKTITFHGFLKAYVEGADDPNAELDDRERRLPQVAEGDALTAEEITVDGHATKPPARYTEASLVKELEEREIGRPSTYASIIGTILDRGYVFKKGTALVPSFLSFAVVNLLEKHFGRLVDYDFTARMEDDLDRIARGEAQSVPWLRRFYFGEGDGTGGGGAADAGNGDGDHLGGLKELVTDLGAIDAREVSSFPVGNDIKLRVGRYGPYVERGEKDAENHQRADVPEDLAPDELSVELAEELLAKPSGDFELGTDPATGHAIVAKDGRYGPYVTEVLPEGTPKTGKNAVKPRTASLFKSMSLDTVTLDDALKLMSLPRVVGADAEGVEITAQNGRYGPYLKKGTDSRSLQTEDQLFEITLEEALAIYAQPKQRGRAAAKPPLKELGTDPVSEKPVVVKDGRFGPYVTDGETNATLRSDDSVEEITPERGYELLAEKRAKGPAKKTAKKAVKKTAAKKAPAKKAAATKKTAAAKTTAAKKTAAKSTAKKTTAKTAAKKATASKTSED.

In terms of domain architecture, Toprim spans 12-135 (RRLVIVESPA…VKRMVFHEIT (124 aa)). 2 residues coordinate Mg(2+): E18 and D104. Positions 150–602 (NQKLVDAQET…RFYFGEGDGT (453 aa)) constitute a Topo IA-type catalytic domain. Positions 184-189 (SAGRVQ) are interaction with DNA. The O-(5'-phospho-DNA)-tyrosine intermediate role is filled by Y334. Residues 847 to 952 (RFGPYVTDGE…KATASKTSED (106 aa)) form a disordered region. The span at 871 to 884 (TPERGYELLAEKRA) shows a compositional bias: basic and acidic residues. Residues 885–906 (KGPAKKTAKKAVKKTAAKKAPA) show a composition bias toward basic residues. Low complexity-rich tracts occupy residues 907–930 (KKAAATKKTAAAKTTAAKKTAAKS) and 937–952 (AKTAAKKATASKTSED).

It belongs to the type IA topoisomerase family. In terms of assembly, monomer. Mg(2+) serves as cofactor.

The catalysed reaction is ATP-independent breakage of single-stranded DNA, followed by passage and rejoining.. In terms of biological role, releases the supercoiling and torsional tension of DNA, which is introduced during the DNA replication and transcription, by transiently cleaving and rejoining one strand of the DNA duplex. Introduces a single-strand break via transesterification at a target site in duplex DNA. The scissile phosphodiester is attacked by the catalytic tyrosine of the enzyme, resulting in the formation of a DNA-(5'-phosphotyrosyl)-enzyme intermediate and the expulsion of a 3'-OH DNA strand. The free DNA strand then undergoes passage around the unbroken strand, thus removing DNA supercoils. Finally, in the religation step, the DNA 3'-OH attacks the covalent intermediate to expel the active-site tyrosine and restore the DNA phosphodiester backbone. Its function is as follows. Relaxes supercoiled plasmid in vitro; in the presence of sIHF (integration host factor) relaxation is decreased. The chain is DNA topoisomerase 1 from Streptomyces coelicolor (strain ATCC BAA-471 / A3(2) / M145).